Consider the following 689-residue polypeptide: Glycine--tRNA ligase beta subunit (689 aa).

Belongs to the class-II aminoacyl-tRNA synthetase family. In terms of assembly, tetramer of two alpha and two beta subunits.

It is found in the cytoplasm. The catalysed reaction is tRNA(Gly) + glycine + ATP = glycyl-tRNA(Gly) + AMP + diphosphate. This Shewanella baltica (strain OS195) protein is Glycine--tRNA ligase beta subunit.